The following is a 246-amino-acid chain: 4-hydroxy-tetrahydrodipicolinate reductase (246 aa).

NAD(+) is bound by residues 7 to 12, 84 to 86, and 108 to 111; these read GATGRT, GTT, and ASNF. Histidine 140 serves as the catalytic Proton donor/acceptor. Histidine 141 is a binding site for (S)-2,3,4,5-tetrahydrodipicolinate. The active-site Proton donor is lysine 144. 150–151 is a (S)-2,3,4,5-tetrahydrodipicolinate binding site; sequence GT.

It belongs to the DapB family.

It is found in the cytoplasm. The enzyme catalyses (S)-2,3,4,5-tetrahydrodipicolinate + NAD(+) + H2O = (2S,4S)-4-hydroxy-2,3,4,5-tetrahydrodipicolinate + NADH + H(+). The catalysed reaction is (S)-2,3,4,5-tetrahydrodipicolinate + NADP(+) + H2O = (2S,4S)-4-hydroxy-2,3,4,5-tetrahydrodipicolinate + NADPH + H(+). The protein operates within amino-acid biosynthesis; L-lysine biosynthesis via DAP pathway; (S)-tetrahydrodipicolinate from L-aspartate: step 4/4. Catalyzes the conversion of 4-hydroxy-tetrahydrodipicolinate (HTPA) to tetrahydrodipicolinate. In Natronomonas pharaonis (strain ATCC 35678 / DSM 2160 / CIP 103997 / JCM 8858 / NBRC 14720 / NCIMB 2260 / Gabara) (Halobacterium pharaonis), this protein is 4-hydroxy-tetrahydrodipicolinate reductase.